The primary structure comprises 199 residues: Thymidine kinase (199 aa).

Residues 15–22 and 88–91 contribute to the ATP site; these read GSMFSGKS and DEIQ. The active-site Proton acceptor is the E89. Residues C145, C148, C183, and H186 each coordinate Zn(2+).

It belongs to the thymidine kinase family. In terms of assembly, homotetramer.

It localises to the cytoplasm. The enzyme catalyses thymidine + ATP = dTMP + ADP + H(+). This is Thymidine kinase from Staphylococcus haemolyticus (strain JCSC1435).